The chain runs to 104 residues: uncharacterized protein (104 aa).

A helical transmembrane segment spans residues 72–92; the sequence is LIFSHNIVIIVSPIYMISFII.

Its subcellular location is the membrane. This is an uncharacterized protein from Saccharomyces cerevisiae (strain ATCC 204508 / S288c) (Baker's yeast).